The chain runs to 270 residues: 3-methyl-2-oxobutanoate hydroxymethyltransferase (270 aa).

Mg(2+) is bound by residues Asp50 and Asp89. 3-methyl-2-oxobutanoate-binding positions include 50–51, Asp89, and Lys118; that span reads DS. A Mg(2+)-binding site is contributed by Glu120. Glu187 functions as the Proton acceptor in the catalytic mechanism.

It belongs to the PanB family. In terms of assembly, homodecamer; pentamer of dimers. Requires Mg(2+) as cofactor.

The protein localises to the cytoplasm. The enzyme catalyses 3-methyl-2-oxobutanoate + (6R)-5,10-methylene-5,6,7,8-tetrahydrofolate + H2O = 2-dehydropantoate + (6S)-5,6,7,8-tetrahydrofolate. Its pathway is cofactor biosynthesis; (R)-pantothenate biosynthesis; (R)-pantoate from 3-methyl-2-oxobutanoate: step 1/2. Its function is as follows. Catalyzes the reversible reaction in which hydroxymethyl group from 5,10-methylenetetrahydrofolate is transferred onto alpha-ketoisovalerate to form ketopantoate. The polypeptide is 3-methyl-2-oxobutanoate hydroxymethyltransferase (Helicobacter pylori (strain HPAG1)).